Consider the following 65-residue polypeptide: Ferredoxin-like protein in vnf region (65 aa).

2 4Fe-4S ferredoxin-type domains span residues 2–29 (AMAI…VLQG) and 30–65 (GIYV…PLDD). Residues Cys10, Cys13, Cys16, Cys20, Cys39, Cys42, Cys50, and Cys54 each coordinate [4Fe-4S] cluster.

[4Fe-4S] cluster is required as a cofactor.

In Azotobacter chroococcum mcd 1, this protein is Ferredoxin-like protein in vnf region.